A 1152-amino-acid chain; its full sequence is Integrin alpha-M (1152 aa).

A signal peptide spans Met-1–Gly-16. At Phe-17–Asn-1104 the chain is on the extracellular side. FG-GAP repeat units follow at residues Asn-18 to Pro-75 and Ile-76 to Gln-135. Cys-66 and Cys-73 form a disulfide bridge. Asn-86 is a glycosylation site (N-linked (GlcNAc...) asparagine). Cys-105 and Cys-123 are disulfide-bonded. The region spanning Asp-150–Leu-328 is the VWFA domain. The N-linked (GlcNAc...) asparagine glycan is linked to Asn-240. 5 FG-GAP repeats span residues Gln-339 to Ile-390, Asn-391 to Trp-442, Glu-443 to Trp-503, Asp-506 to Ser-564, and Gln-569 to Arg-629. Residue Asn-391 is glycosylated (N-linked (GlcNAc...) asparagine). Positions 465, 467, 469, 473, 529, 531, 533, 537, 592, 596, and 600 each coordinate Ca(2+). The N-linked (GlcNAc...) asparagine glycan is linked to Asn-469. Cys-654 and Cys-711 are oxidised to a cystine. N-linked (GlcNAc...) asparagine glycosylation is found at Asn-692, Asn-696, and Asn-734. A disulfide bridge connects residues Cys-770 and Cys-776. Asn-801 is a glycosylation site (N-linked (GlcNAc...) asparagine). Cys-847 and Cys-864 are joined by a disulfide. N-linked (GlcNAc...) asparagine glycosylation is found at Asn-880, Asn-900, Asn-911, Asn-940, Asn-946, Asn-978, Asn-993, and Asn-1021. 2 disulfide bridges follow: Cys-998/Cys-1022 and Cys-1027/Cys-1032. Residues Asn-1044, Asn-1050, and Asn-1075 are each glycosylated (N-linked (GlcNAc...) asparagine). A helical transmembrane segment spans residues Pro-1105–Tyr-1128. Residues Lys-1129–Gln-1152 are Cytoplasmic-facing. A GFFKR motif motif is present at residues Gly-1131–Arg-1135.

It belongs to the integrin alpha chain family. Heterodimer of an alpha and a beta subunit. ITGAM associates with ITGB2. Found in a complex with CD177 and ITGB2/CD18. Interacts with JAM3. Interacts with THBD. Interacts with complement factor H/CFH; this interaction mediates adhesion of neutrophils to pathogens leading to pathogen clearance. Interacts with TMEM268; this interaction inhibits ITGAM degradation via the endosome-lysosome pathway. In terms of tissue distribution, predominantly expressed in monocytes and granulocytes. Expressed in neutrophils (at protein level).

Its subcellular location is the cell membrane. The protein localises to the membrane raft. Its function is as follows. Integrin ITGAM/ITGB2 is implicated in various adhesive interactions of monocytes, macrophages and granulocytes as well as in mediating the uptake of complement-coated particles and pathogens. It is identical with CR-3, the receptor for the iC3b fragment of the third complement component. It probably recognizes the R-G-D peptide in C3b. Integrin ITGAM/ITGB2 is also a receptor for fibrinogen, factor X and ICAM1. It recognizes P1 and P2 peptides of fibrinogen gamma chain. Regulates neutrophil migration. In association with beta subunit ITGB2/CD18, required for CD177-PRTN3-mediated activation of TNF primed neutrophils. May regulate phagocytosis-induced apoptosis in extravasated neutrophils. May play a role in mast cell development. Required with TYROBP/DAP12 in microglia to control production of microglial superoxide ions which promote the neuronal apoptosis that occurs during brain development. This is Integrin alpha-M (ITGAM) from Homo sapiens (Human).